A 322-amino-acid polypeptide reads, in one-letter code: Transcriptional activator protein Pur-alpha (322 aa).

The disordered stretch occupies residues 1-55 (MADRDSGSEQGGAALGSGGSLGHPGSGSGSGGGGGGGGGGGGSGGGGGGAPGGLQ). Residue Ala-2 is modified to N-acetylalanine. Gly residues predominate over residues 9 to 52 (EQGGAALGSGGSLGHPGSGSGSGGGGGGGGGGGGSGGGGGGAPG). The PUR repeat I repeat unit spans residues 60-125 (ELASKRVDIQ…DFIEHYAQLG (66 aa)). The PUR repeat II repeat unit spans residues 142–213 (ALKSEFLVRE…KLIDDYGVEE (72 aa)). A Phosphoserine modification is found at Ser-182. One copy of the PUR repeat III repeat lies at 215–281 (PAELPEGTSL…CKYSEEMKKI (67 aa)). A compositionally biased stretch (low complexity) spans 295–314 (LHQQQQQQQEETAAATLLLQ). A disordered region spans residues 295–322 (LHQQQQQQQEETAAATLLLQGEEEGEED).

This sequence belongs to the PUR DNA-binding protein family. In terms of assembly, homodimer, heterodimer with PURB and heterotrimer with PURB and YBX1/Y-box protein 1. Interacts with FMR1; this interaction occurs in association with polyribosome.

It is found in the nucleus. Functionally, this is a probable transcription activator that specifically binds the purine-rich single strand of the PUR element located upstream of the MYC gene. May play a role in the initiation of DNA replication and in recombination. The protein is Transcriptional activator protein Pur-alpha (PURA) of Homo sapiens (Human).